The primary structure comprises 405 residues: GTPase Obg (405 aa).

The Obg domain occupies methionine 1–leucine 159. The interval asparagine 127–glutamate 148 is disordered. Residues arginine 129–proline 143 show a composition bias toward polar residues. Residues alanine 160 to aspartate 333 enclose the OBG-type G domain. Residues glycine 166–serine 173, phenylalanine 191–valine 195, aspartate 213–glycine 216, asparagine 283–aspartate 286, and serine 314–leucine 316 contribute to the GTP site. The Mg(2+) site is built by serine 173 and threonine 193. Positions alanine 383–glycine 398 are enriched in acidic residues. The segment at alanine 383–arginine 405 is disordered.

Belongs to the TRAFAC class OBG-HflX-like GTPase superfamily. OBG GTPase family. Monomer. Mg(2+) serves as cofactor.

Its subcellular location is the cytoplasm. Functionally, an essential GTPase which binds GTP, GDP and possibly (p)ppGpp with moderate affinity, with high nucleotide exchange rates and a fairly low GTP hydrolysis rate. Plays a role in control of the cell cycle, stress response, ribosome biogenesis and in those bacteria that undergo differentiation, in morphogenesis control. The protein is GTPase Obg of Azotobacter vinelandii (strain DJ / ATCC BAA-1303).